We begin with the raw amino-acid sequence, 823 residues long: ATP-dependent DNA helicase At3g02060, chloroplastic (823 aa).

Residues M1–S53 constitute a chloroplast transit peptide. A Helicase ATP-binding domain is found at L285–I447. Residue G298–T305 coordinates ATP. The short motif at D400–Q403 is the DEEQ box element. The Helicase C-terminal domain maps to R465–G622.

It belongs to the helicase family.

It is found in the plastid. It localises to the chloroplast. The enzyme catalyses ATP + H2O = ADP + phosphate + H(+). This Arabidopsis thaliana (Mouse-ear cress) protein is ATP-dependent DNA helicase At3g02060, chloroplastic.